A 314-amino-acid chain; its full sequence is Hydroxyethylthiazole kinase (314 aa).

Met-70 contributes to the substrate binding site. Residues Arg-145 and Ser-217 each contribute to the ATP site. Gly-244 is a substrate binding site.

Belongs to the Thz kinase family. Requires Mg(2+) as cofactor.

It carries out the reaction 5-(2-hydroxyethyl)-4-methylthiazole + ATP = 4-methyl-5-(2-phosphooxyethyl)-thiazole + ADP + H(+). Its pathway is cofactor biosynthesis; thiamine diphosphate biosynthesis; 4-methyl-5-(2-phosphoethyl)-thiazole from 5-(2-hydroxyethyl)-4-methylthiazole: step 1/1. Its function is as follows. Catalyzes the phosphorylation of the hydroxyl group of 4-methyl-5-beta-hydroxyethylthiazole (THZ). The polypeptide is Hydroxyethylthiazole kinase (Bifidobacterium longum (strain NCC 2705)).